A 1026-amino-acid polypeptide reads, in one-letter code: RecBCD enzyme subunit RecB (1026 aa).

Residues 1–438 enclose the UvrD-like helicase ATP-binding domain; it reads MSSFDIFSPT…LILDTNYRST (438 aa). Residues 1–766 are DNA-binding and helicase activity, interacts with RecC; sequence MSSFDIFSPT…LANYANITQH (766 aa). Residue 21-28 participates in ATP binding; that stretch reads ASAGTGKT. Residues 452-700 enclose the UvrD-like helicase C-terminal domain; that stretch reads PSPFLETPQT…KITTVHSSKG (249 aa). Residues 815–1026 form a nuclease activity, interacts with RecD and RecA region; the sequence is SQPIYSFSST…KGNGFLQPSP (212 aa). The Mg(2+) site is built by H854, D940, and D953. Catalysis depends on D953, which acts as the For nuclease activity.

Belongs to the helicase family. UvrD subfamily. In terms of assembly, heterotrimer of RecB, RecC and RecD. All subunits contribute to DNA-binding. Interacts with RecA. The cofactor is Mg(2+).

The catalysed reaction is Exonucleolytic cleavage (in the presence of ATP) in either 5'- to 3'- or 3'- to 5'-direction to yield 5'-phosphooligonucleotides.. The enzyme catalyses Couples ATP hydrolysis with the unwinding of duplex DNA by translocating in the 3'-5' direction.. It carries out the reaction ATP + H2O = ADP + phosphate + H(+). In terms of biological role, a helicase/nuclease that prepares dsDNA breaks (DSB) for recombinational DNA repair. Binds to DSBs and unwinds DNA via a highly rapid and processive ATP-dependent bidirectional helicase activity. Unwinds dsDNA until it encounters a Chi (crossover hotspot instigator) sequence from the 3' direction. Cuts ssDNA a few nucleotides 3' to the Chi site. The properties and activities of the enzyme are changed at Chi. The Chi-altered holoenzyme produces a long 3'-ssDNA overhang and facilitates RecA-binding to the ssDNA for homologous DNA recombination and repair. Holoenzyme degrades any linearized DNA that is unable to undergo homologous recombination. In the holoenzyme this subunit contributes ATPase, 3'-5' helicase, exonuclease activity and loads RecA onto ssDNA. This is RecBCD enzyme subunit RecB from Chlamydia muridarum (strain MoPn / Nigg).